The following is a 274-amino-acid chain: Adenosylcobinamide-GDP ribazoletransferase (274 aa).

Helical transmembrane passes span 46-66, 69-89, 117-137, 151-173, 192-212, 216-236, and 253-273; these read VMASVPFIGIVLGIVGGAIAF, TSLGVASIVAATVIVCFWELF, IIADPATGLIGMGACLISILI, WWMVMITPMIGRFCAIFGAHSRL, HTIIAWLCVLLVICIGVPLAM, ELITITILGLLCSVTLALVEI, and FIMHSATALCALVFAVGVGIV.

Belongs to the CobS family. Requires Mg(2+) as cofactor.

The protein resides in the cell membrane. The catalysed reaction is alpha-ribazole + adenosylcob(III)inamide-GDP = adenosylcob(III)alamin + GMP + H(+). It carries out the reaction alpha-ribazole 5'-phosphate + adenosylcob(III)inamide-GDP = adenosylcob(III)alamin 5'-phosphate + GMP + H(+). It functions in the pathway cofactor biosynthesis; adenosylcobalamin biosynthesis; adenosylcobalamin from cob(II)yrinate a,c-diamide: step 7/7. Joins adenosylcobinamide-GDP and alpha-ribazole to generate adenosylcobalamin (Ado-cobalamin). Also synthesizes adenosylcobalamin 5'-phosphate from adenosylcobinamide-GDP and alpha-ribazole 5'-phosphate. This Corynebacterium diphtheriae (strain ATCC 700971 / NCTC 13129 / Biotype gravis) protein is Adenosylcobinamide-GDP ribazoletransferase.